We begin with the raw amino-acid sequence, 361 residues long: Chorismate synthase (361 aa).

The NADP(+) site is built by arginine 48 and arginine 54. Residues 125 to 127 (RSS), 238 to 239 (NA), glycine 278, 293 to 297 (KPTSS), and arginine 319 each bind FMN.

This sequence belongs to the chorismate synthase family. Homotetramer. FMNH2 serves as cofactor.

The enzyme catalyses 5-O-(1-carboxyvinyl)-3-phosphoshikimate = chorismate + phosphate. The protein operates within metabolic intermediate biosynthesis; chorismate biosynthesis; chorismate from D-erythrose 4-phosphate and phosphoenolpyruvate: step 7/7. In terms of biological role, catalyzes the anti-1,4-elimination of the C-3 phosphate and the C-6 proR hydrogen from 5-enolpyruvylshikimate-3-phosphate (EPSP) to yield chorismate, which is the branch point compound that serves as the starting substrate for the three terminal pathways of aromatic amino acid biosynthesis. This reaction introduces a second double bond into the aromatic ring system. In Vibrio parahaemolyticus serotype O3:K6 (strain RIMD 2210633), this protein is Chorismate synthase.